The primary structure comprises 190 residues: Holliday junction branch migration complex subunit RuvA (190 aa).

Residues 1 to 64 form a domain I region; that stretch reads MIGRITGTLI…EDAHILYGFA (64 aa). The interval 65–137 is domain II; the sequence is TAAERGAFRE…MRGKLGADIG (73 aa). The segment at 137–141 is flexible linker; sequence GATAH. The domain III stretch occupies residues 142-190; that stretch reads AVPDSQTDILNALLALGYSDKESQAALKKLPEGTGVSEGIRLALKALVR.

Belongs to the RuvA family. In terms of assembly, homotetramer. Forms an RuvA(8)-RuvB(12)-Holliday junction (HJ) complex. HJ DNA is sandwiched between 2 RuvA tetramers; dsDNA enters through RuvA and exits via RuvB. An RuvB hexamer assembles on each DNA strand where it exits the tetramer. Each RuvB hexamer is contacted by two RuvA subunits (via domain III) on 2 adjacent RuvB subunits; this complex drives branch migration. In the full resolvosome a probable DNA-RuvA(4)-RuvB(12)-RuvC(2) complex forms which resolves the HJ.

Its subcellular location is the cytoplasm. In terms of biological role, the RuvA-RuvB-RuvC complex processes Holliday junction (HJ) DNA during genetic recombination and DNA repair, while the RuvA-RuvB complex plays an important role in the rescue of blocked DNA replication forks via replication fork reversal (RFR). RuvA specifically binds to HJ cruciform DNA, conferring on it an open structure. The RuvB hexamer acts as an ATP-dependent pump, pulling dsDNA into and through the RuvAB complex. HJ branch migration allows RuvC to scan DNA until it finds its consensus sequence, where it cleaves and resolves the cruciform DNA. This chain is Holliday junction branch migration complex subunit RuvA, found in Bordetella petrii (strain ATCC BAA-461 / DSM 12804 / CCUG 43448).